Reading from the N-terminus, the 202-residue chain is Transmembrane protein 223 (202 aa).

The Mitochondrial matrix segment spans residues 1–43 (MAAPWRRWPTGLLAVLRPLLTCRPLQGTTLQRDVLLFEHDRGR). Residues 44–64 (FFTILGLFCAGQGVFWASMAV) form a helical membrane-spanning segment. Residues 65 to 97 (AAVSRPPVPVQPLDAEVPNRGPFDLRSALWRYG) are Mitochondrial intermembrane-facing. Residues 98-118 (LAVGCGAIGALVLGAGLLFSL) traverse the membrane as a helical segment. The Mitochondrial matrix segment spans residues 119–202 (RSVRSVVLRA…DNTVGAYRSL (84 aa)).

This sequence belongs to the TMEM223 family. Associates with the mitochondrial ribosome.

It localises to the mitochondrion inner membrane. In terms of biological role, mitochondrial ribosome-associated protein involved in the first steps of cytochrome c oxidase complex (complex IV) biogenesis. Stimulates the translation of MT-CO1 mRNA and is a constituent of early MT-CO1 assembly intermediates. This is Transmembrane protein 223 from Homo sapiens (Human).